The chain runs to 584 residues: Aspartate--tRNA ligase (584 aa).

Glu-169 serves as a coordination point for L-aspartate. Positions 193-196 (QLFK) are aspartate. Residue Arg-215 participates in L-aspartate binding. ATP contacts are provided by residues 215–217 (RDE) and Gln-224. His-446 is a binding site for L-aspartate. Position 480 (Glu-480) interacts with ATP. Arg-487 contacts L-aspartate. 532 to 535 (GLDR) contributes to the ATP binding site.

It belongs to the class-II aminoacyl-tRNA synthetase family. Type 1 subfamily. As to quaternary structure, homodimer.

It localises to the cytoplasm. It carries out the reaction tRNA(Asp) + L-aspartate + ATP = L-aspartyl-tRNA(Asp) + AMP + diphosphate. In terms of biological role, catalyzes the attachment of L-aspartate to tRNA(Asp) in a two-step reaction: L-aspartate is first activated by ATP to form Asp-AMP and then transferred to the acceptor end of tRNA(Asp). The chain is Aspartate--tRNA ligase from Buchnera aphidicola subsp. Schizaphis graminum (strain Sg).